Reading from the N-terminus, the 639-residue chain is MTLEITGSELIKSKLIDAPERSGVYRMFDVNKQVLYVGKAKNLKKRLTNYIKSNLDNKTLRMIANTCFLEYSITNSEVEALLLEAQLIKKFQPKFNILLKDCKSFPFIKLRLDHDFPQLLKYRGKTLSDGKFFGPFASSAEVNTTLTELQKIFKLRSCTDNYFNSRTRPCLQYEIKRCYAPCVGKINKEDYRDLVTQVKDFLQGRTKELQENLSRKMEELSSQMRFEEAAEIRDRIKALSYVQLKAGVSDVVKDADIIAIVEKNGHYCVEVFLYRAGQACGNIPYFPTSTENSTKEEVLEYFLLQFYQKQHVPAAIIINHEINDKENVIEAIKKINNILQLNITVPNKGGKAKLVQNAETNALFSLEQYLKKFAKNQEIMFEIKELFGLSEIPERIEIYDNSHIQGKFAVGVMVVAGKVGFDKKEYRVFNVHAPSLVCHSRESGDPKRLMDSCFRGNGIKNCGGDIKGDDYEMLRQVLTRRLTRLRQEPHKLPSLMIIDGGKGHLGVVKEVMDKFEMNIPFVCMSKGVDRNTGFEQFHVIGKEVFTLDKNLPVMKYLQILRDEAHNFAIKNHRLGRSRAIKISRLDDIEGVGETRKKALLHYFGSYKAVCDATIYELAKVNGINKLLAEMIFNVLHRKN.

The region spanning Glu-20–Ile-97 is the GIY-YIG domain. A UVR domain is found at Lys-207–Val-242.

It belongs to the UvrC family. As to quaternary structure, interacts with UvrB in an incision complex.

Its subcellular location is the cytoplasm. In terms of biological role, the UvrABC repair system catalyzes the recognition and processing of DNA lesions. UvrC both incises the 5' and 3' sides of the lesion. The N-terminal half is responsible for the 3' incision and the C-terminal half is responsible for the 5' incision. The protein is UvrABC system protein C of Rickettsia peacockii (strain Rustic).